The chain runs to 423 residues: Pseudouridylate synthase 1 homolog (423 aa).

The tract at residues 32-75 is disordered; sequence AGNKVPPALASHQPDRKGRGGWVWEETEHPAKRVKGGEDEEPPR. Residues 57–68 show a composition bias toward basic and acidic residues; the sequence is ETEHPAKRVKGG. The active-site Nucleophile is the Asp142. Residues 403 to 423 are disordered; sequence ADTGAKVPSSLEGSEGDGDTD. Residues Ser411 and Ser416 each carry the phosphoserine modification. Thr422 is subject to Phosphothreonine.

The protein belongs to the tRNA pseudouridine synthase TruA family. Monomer. Forms a complex with RARG and the SRA1 RNA in the nucleus.

The protein resides in the nucleus. The protein localises to the cytoplasm. Its subcellular location is the mitochondrion. It carries out the reaction a uridine in tRNA = a pseudouridine in tRNA. The enzyme catalyses uridine(38/39/40) in tRNA = pseudouridine(38/39/40) in tRNA. The catalysed reaction is a uridine in mRNA = a pseudouridine in mRNA. Pseudouridylate synthase that catalyzes pseudouridylation of tRNAs and mRNAs. Acts on positions 27/28 in the anticodon stem and also positions 34 and 36 in the anticodon of an intron containing tRNA. Also catalyzes pseudouridylation of mRNAs: mediates pseudouridylation of mRNAs with the consensus sequence 5'-UGUAG-3'. Acts as a regulator of pre-mRNA splicing by mediating pseudouridylation of pre-mRNAs at locations associated with alternatively spliced regions. Pseudouridylation of pre-mRNAs near splice sites directly regulates mRNA splicing and mRNA 3'-end processing. Involved in regulation of nuclear receptor activity through pseudouridylation of SRA1 mRNA. Its function is as follows. Does not form pseudouridine when expressed in vitro. The protein is Pseudouridylate synthase 1 homolog of Mus musculus (Mouse).